The sequence spans 85 residues: Large ribosomal subunit protein bL27 (85 aa).

The interval 1 to 21 (MAHKKGQGSTQNNRDSAGRRL) is disordered.

Belongs to the bacterial ribosomal protein bL27 family.

This is Large ribosomal subunit protein bL27 from Wolinella succinogenes (strain ATCC 29543 / DSM 1740 / CCUG 13145 / JCM 31913 / LMG 7466 / NCTC 11488 / FDC 602W) (Vibrio succinogenes).